The chain runs to 422 residues: MIPRIKKTICVLLVCFTMLSVMLGPGATEVLAASDVTVNVSAEKQVIRGFGGMNHPAWAGDLTAAQRETAFGNGQNQLGFSILRIHVDENRNNWYKEVETAKSAVKHGAIVFASPWNPPSDMVETFNRNGDTSAKRLKYNKYAAYAQHLNDFVTFMKNNGVNLYAISVQNEPDYAHEWTWWTPQEILRFMRENAGSINARVIAPESFQYLKNLSDPILNDPQALANMDILGTHLYGTQVSQFPYPLFKQKGAGKDLWMTEVYYPNSDTNSADRWPEALDVSQHIHNAMVEGDFQAYVWWYIRRSYGPMKEDGTISKRGYNMAHFSKFVRPGYVRIDATKNPNANVYVSAYKGDNKVVIVAINKSNTGVNQNFVLQNGSASNVSRWITSSSSNLQPGTNLTVSGNHFWAHLPAQSVTTFVVNR.

An N-terminal signal peptide occupies residues 1–32 (MIPRIKKTICVLLVCFTMLSVMLGPGATEVLA). The active-site Proton donor is the Glu171. Glu260 serves as the catalytic Nucleophile.

This sequence belongs to the glycosyl hydrolase 30 family.

The protein resides in the secreted. The enzyme catalyses Endohydrolysis of (1-&gt;4)-beta-D-xylosyl links in some glucuronoarabinoxylans.. It functions in the pathway glycan degradation; xylan degradation. Functionally, catalyzes the depolymerization of methylglucuronoxylan (MeGAXn) from different sources. It cleaves the beta-1,4-xylosidic bond penultimate to that linking carbon one of the xylose residue substituted with alpha-1,2-linked 4-O-methyl-D-glucuronate (MeGA). The protein is Glucuronoxylanase XynC (xynC) of Bacillus subtilis (strain 168).